Reading from the N-terminus, the 723-residue chain is Nucleolar protein 11 (723 aa).

The protein resides in the nucleus. The protein localises to the nucleolus. Its function is as follows. Ribosome biogenesis factor. May be required for both optimal rDNA transcription and pre-rRNA processing. The polypeptide is Nucleolar protein 11 (NOL11) (Gallus gallus (Chicken)).